We begin with the raw amino-acid sequence, 286 residues long: NAD kinase (286 aa).

Asp-74 serves as the catalytic Proton acceptor. NAD(+) is bound by residues Asp-74–Gly-75, Asn-148–Asp-149, Asp-178, Ala-186, Thr-189–Ser-194, and Gln-244.

This sequence belongs to the NAD kinase family. A divalent metal cation is required as a cofactor.

It localises to the cytoplasm. The enzyme catalyses NAD(+) + ATP = ADP + NADP(+) + H(+). In terms of biological role, involved in the regulation of the intracellular balance of NAD and NADP, and is a key enzyme in the biosynthesis of NADP. Catalyzes specifically the phosphorylation on 2'-hydroxyl of the adenosine moiety of NAD to yield NADP. This chain is NAD kinase, found in Campylobacter jejuni subsp. jejuni serotype O:6 (strain 81116 / NCTC 11828).